The primary structure comprises 374 residues: RNA polymerase sigma factor SigA (374 aa).

Positions 141–211 are sigma-70 factor domain-2; that stretch reads LAEANLRLVV…TRAIADQART (71 aa). An Interaction with polymerase core subunit RpoC motif is present at residues 165–168; it reads DLIQ. Residues 220–296 form a sigma-70 factor domain-3 region; that stretch reads ETINKLIRVQ…DQDATSPSDH (77 aa). The tract at residues 309–362 is sigma-70 factor domain-4; sequence VLDTLTDREENVLRLRFGLDDGRTRTLEEVGRVFGVTRERIRQIEAKALRKLRH. A DNA-binding region (H-T-H motif) is located at residues 335-354; that stretch reads LEEVGRVFGVTRERIRQIEA.

The protein belongs to the sigma-70 factor family. RpoD/SigA subfamily. Interacts transiently with the RNA polymerase catalytic core.

The protein localises to the cytoplasm. Functionally, sigma factors are initiation factors that promote the attachment of RNA polymerase to specific initiation sites and are then released. This sigma factor is the primary sigma factor during exponential growth. The sequence is that of RNA polymerase sigma factor SigA from Listeria monocytogenes serovar 1/2a (strain ATCC BAA-679 / EGD-e).